We begin with the raw amino-acid sequence, 538 residues long: Carboxypeptidase 2 (538 aa).

Residues 1–21 form the signal peptide; that stretch reads MVAYRFLTLISLGLGSHCASA. Asn-46 is a glycosylation site (N-linked (GlcNAc...) asparagine). The interval 53 to 76 is disordered; that stretch reads PAFTSPGTVPRGFSDGTSGPTRDE. In terms of domain architecture, Peptidase M14 spans 71–351; it reads GPTRDETMEG…VMVKSILQTA (281 aa). Residues His-136, Glu-139, and His-224 each coordinate Zn(2+). Glu-322 serves as the catalytic Proton donor/acceptor. Asn-393 and Asn-459 each carry an N-linked (GlcNAc...) asparagine glycan.

The protein belongs to the peptidase M14 family. It depends on Zn(2+) as a cofactor.

Its subcellular location is the secreted. In terms of biological role, extracellular metalloprotease that contributes to pathogenicity. The chain is Carboxypeptidase 2 (MCPB) from Trichophyton tonsurans (Scalp ringworm fungus).